The chain runs to 533 residues: Probable fucosyltransferase 5 (533 aa).

Over 1 to 13 (MYQKFQISGKIVK) the chain is Cytoplasmic. The helical; Signal-anchor for type II membrane protein transmembrane segment at 14–34 (TLGLKMKVLIAVSFGSLLFIL) threads the bilayer. Residues 35–533 (SYSNNFNNKL…YGGLKLYDEF (499 aa)) lie on the Lumenal side of the membrane. Residues asparagine 202, asparagine 227, asparagine 374, asparagine 396, and asparagine 475 are each glycosylated (N-linked (GlcNAc...) asparagine).

Belongs to the glycosyltransferase 37 family. Expressed in roots, leaves, flowers and siliques.

The protein resides in the golgi apparatus. Its subcellular location is the golgi stack membrane. The protein operates within protein modification; protein glycosylation. Its function is as follows. May be involved in cell wall biosynthesis. May act as a fucosyltransferase. This chain is Probable fucosyltransferase 5 (FUT5), found in Arabidopsis thaliana (Mouse-ear cress).